A 915-amino-acid chain; its full sequence is Protein inturned (915 aa).

The disordered stretch occupies residues 88-144; sequence NAKRQANSSNKSEAKLKKLTKILRRKRRPSQRKAEGKDSSQRPASILKNQAGQRPGV. Positions 104-118 are enriched in basic residues; it reads KKLTKILRRKRRPSQ. Residues 128-139 show a composition bias toward polar residues; that stretch reads QRPASILKNQAG. Positions 165 to 253 constitute a PDZ domain; sequence SVSSSSADRG…PMQVRLTLET (89 aa). The segment at 688–738 is disordered; sequence GIRGRRASPQRSQSDSGSEGHADGTPASVARRDSLGSGGSDGSLGSAGFLK.

The protein belongs to the inturned family.

Its subcellular location is the cytoplasm. The protein localises to the cell surface. The protein resides in the cytoskeleton. It localises to the cilium basal body. Plays a key role in ciliogenesis and embryonic development. Regulator of cilia formation by controlling the organization of the apical actin cytoskeleton and the positioning of the basal bodies at the apical cell surface, which in turn is essential for the normal orientation of elongating ciliary microtubules. Plays a key role in definition of cell polarity via its role in ciliogenesis but not via conversion extension. Has an indirect effect on hedgehog signaling. The chain is Protein inturned (intu) from Danio rerio (Zebrafish).